We begin with the raw amino-acid sequence, 86 residues long: Omega-theraphotoxin-Hhn1e (86 aa).

An N-terminal signal peptide occupies residues 1–21 (MKSIVFVALFGLALLAVVCSA). The propeptide occupies 22–50 (SEGAHKELLKEVVRAMVVDKTDAVQAEER). Disulfide bonds link cysteine 52-cysteine 66 and cysteine 65-cysteine 78.

The protein belongs to the neurotoxin 10 (Hwtx-1) family. 17 (Hntx-9) subfamily. In terms of tissue distribution, expressed by the venom gland.

The protein resides in the secreted. Its function is as follows. Ion channel inhibitor. This Cyriopagopus hainanus (Chinese bird spider) protein is Omega-theraphotoxin-Hhn1e.